A 338-amino-acid polypeptide reads, in one-letter code: Terpene synthase 1 (338 aa).

Positions 80–85 (DDALDS) match the DDxx(x)D/E motif motif. The short motif at 220 to 228 (NDLVSYEKE) is the NDxxSxxxD/E motif element.

It belongs to the terpene synthase family.

The catalysed reaction is (2E,6E)-farnesyl diphosphate = (2S,3R,6S,9S)-(-)-protoillud-7-ene + diphosphate. Terpene synthase that converts its substrate farnesyl diphosphate (FPP) into the sesquiterpene protoillud-7-ene. This Cavenderia fasciculata (Slime mold) protein is Terpene synthase 1.